We begin with the raw amino-acid sequence, 175 residues long: MTQNSQETVIGRITSVFGVKGWLKVFSYTDPKDGILNYRDWTLLLDGKRIPIRLEEGRRQGQGIVVRLKGIDDREVARTYCGAEIRVPTEQLPELPEGEFYWHQLEGLDVFTVEGECLGKVHHLLETGSNDVLVVHATAGSIDQRERLIPYLPDQVVQQVDLKGSRMVVDWDPEF.

Positions 97–175 constitute a PRC barrel domain; it reads EGEFYWHQLE…RMVVDWDPEF (79 aa).

It belongs to the RimM family. In terms of assembly, binds ribosomal protein uS19.

It is found in the cytoplasm. An accessory protein needed during the final step in the assembly of 30S ribosomal subunit, possibly for assembly of the head region. Essential for efficient processing of 16S rRNA. May be needed both before and after RbfA during the maturation of 16S rRNA. It has affinity for free ribosomal 30S subunits but not for 70S ribosomes. The protein is Ribosome maturation factor RimM of Marinobacter nauticus (strain ATCC 700491 / DSM 11845 / VT8) (Marinobacter aquaeolei).